A 293-amino-acid polypeptide reads, in one-letter code: 4-diphosphocytidyl-2-C-methyl-D-erythritol kinase (293 aa).

Lysine 10 is a catalytic residue. Proline 94 to serine 104 provides a ligand contact to ATP. Residue aspartate 136 is part of the active site.

This sequence belongs to the GHMP kinase family. IspE subfamily.

It carries out the reaction 4-CDP-2-C-methyl-D-erythritol + ATP = 4-CDP-2-C-methyl-D-erythritol 2-phosphate + ADP + H(+). It functions in the pathway isoprenoid biosynthesis; isopentenyl diphosphate biosynthesis via DXP pathway; isopentenyl diphosphate from 1-deoxy-D-xylulose 5-phosphate: step 3/6. Its function is as follows. Catalyzes the phosphorylation of the position 2 hydroxy group of 4-diphosphocytidyl-2C-methyl-D-erythritol. In Listeria monocytogenes serotype 4b (strain CLIP80459), this protein is 4-diphosphocytidyl-2-C-methyl-D-erythritol kinase.